We begin with the raw amino-acid sequence, 508 residues long: MWELVALLLLTLAYLFWPKRRCPGAKYPKSLLSLPLVGSLPFLPRHGHMHNNFFKLQKKYGPIYSVRMGTKTTVIVGHHQLAKEVLIKKGKDFSGRPQVTTLDILSNNRKGIAFADYGAHWQLHRRLAMATFALFKDGDQKLEKIICQEISTLCDMLATHNGQTIDISFPVFVAITNVISLICFNISYKNGDPELKIVHNYNEGIIDSLGKESLVDLFPWLKVFPNKTLEKLKRHVKTRNDLLTKIFENYKEKFRSDSITNMLDVLMQAKMNSDNGNAGPDQDSELLSDNHILTTIGDIFGAGVETTTSVVKWIVAFLLHNPQVKKKLYEGIDQNVGFSRTPTISDRNRLLLLEATIREVLRIRPVAPMLIPHKANVDSSIGEFAVDKGTHVIINLWALHHNEKEWHQPDQFMPERFLNPAGTQLISPSLSYLPFGAGPRSCIGEILARQELFLIMAWLLQRFDLEVPDDGQLPSLEGNPKVVFLIDSFKVKIKVRQAWREAQAEGST.

Asparagine 202 contacts substrate. A heme-binding site is contributed by cysteine 442.

Belongs to the cytochrome P450 family. Requires heme as cofactor.

The protein resides in the endoplasmic reticulum membrane. Its subcellular location is the microsome membrane. The catalysed reaction is a C21-steroid + reduced [NADPH--hemoprotein reductase] + O2 = a 17alpha-hydroxy-C21-steroid + oxidized [NADPH--hemoprotein reductase] + H2O + H(+). The enzyme catalyses progesterone + reduced [NADPH--hemoprotein reductase] + O2 = 17alpha-hydroxyprogesterone + oxidized [NADPH--hemoprotein reductase] + H2O + H(+). It carries out the reaction pregnenolone + reduced [NADPH--hemoprotein reductase] + O2 = 17alpha-hydroxypregnenolone + oxidized [NADPH--hemoprotein reductase] + H2O + H(+). It catalyses the reaction 17alpha-hydroxypregnenolone + reduced [NADPH--hemoprotein reductase] + O2 = 3beta-hydroxyandrost-5-en-17-one + acetate + oxidized [NADPH--hemoprotein reductase] + H2O + 2 H(+). The protein operates within steroid hormone biosynthesis. It participates in steroid biosynthesis; glucocorticoid biosynthesis. Regulated predominantly by intracellular cAMP levels. The 17,20-lyase activity is stimulated by cytochrome b5, which acts as an allosteric effector increasing the Vmax of the lyase activity. Functionally, a cytochrome P450 monooxygenase involved in corticoid and androgen biosynthesis. Catalyzes 17-alpha hydroxylation of C21 steroids, which is common for both pathways. A second oxidative step, required only for androgen synthesis, involves an acyl-carbon cleavage. Hydroxylates pregnenolone to form 17-alpha pregnenolone, followed by the cleavage of the C17-C20 bond to form dehydroepiandrosterone (DHEA). Has 17-alpha hydroxylase activity toward progesterone. The 17-alpha hydroxy intermediates, as part of adrenal glucocorticoids biosynthesis pathway, are precursors of cortisol. Mechanistically, uses molecular oxygen inserting one oxygen atom into a substrate, and reducing the second into a water molecule, with two electrons provided by NADPH via cytochrome P450 reductase (CPR; NADPH-ferrihemoprotein reductase). The protein is Steroid 17-alpha-hydroxylase/17,20 lyase (CYP17A1) of Papio hamadryas ursinus (Chacma baboon).